Reading from the N-terminus, the 704-residue chain is E3 ubiquitin-protein ligase MBR1 (704 aa).

6 disordered regions span residues 1 to 20 (MNPMQGPRSIGGSSTEVNQV), 37 to 61 (NPADTGFPNNSTPSGRPTYASSSSH), 176 to 197 (SSLGSSVQAAGESSSGPASPFG), 245 to 354 (LSLA…GENQ), 381 to 403 (SNPSGIGMPAERLGPQWETPRSN), and 436 to 525 (SLFV…RHRR). Polar residues predominate over residues 43-61 (FPNNSTPSGRPTYASSSSH). Low complexity-rich tracts occupy residues 184-196 (AAGESSSGPASPF) and 245-255 (LSLATPSQSSP). Composition is skewed to polar residues over residues 281-290 (FHSTRNTDTL), 300-329 (RQPQESVAFSVSHGGTSVRPTGSLQQNLPL), and 340-354 (RSSSITSGSNTGENQ). Residues 452–467 (QPNPTWIPPQNAPPHN) show a composition bias toward pro residues. The span at 485–505 (SPSASHGGPLPLLPAGPSVSS) shows a compositional bias: low complexity. The RING-type; atypical zinc finger occupies 656–697 (CCICQEEYVEGDNLGTLKCGHEFHKDCIKQWVMIKNLCPICK).

It belongs to the RING-type zinc finger family. As to quaternary structure, interacts with MED25 and UBC11.

It catalyses the reaction S-ubiquitinyl-[E2 ubiquitin-conjugating enzyme]-L-cysteine + [acceptor protein]-L-lysine = [E2 ubiquitin-conjugating enzyme]-L-cysteine + N(6)-ubiquitinyl-[acceptor protein]-L-lysine.. It functions in the pathway protein modification; protein ubiquitination. Functionally, E3 ubiquitin-protein ligase that functions as a regulator of MED25 stability by targeting MED25 for degradation in a RING-H2-dependent way. Proteasome-dependent degradation of MED25 seems to activate its function as positive regulator of FLOWERING LOCUS T (FT) and is important to induce the expression of FT and consequently to promote flowering. The chain is E3 ubiquitin-protein ligase MBR1 (MBR1) from Arabidopsis thaliana (Mouse-ear cress).